We begin with the raw amino-acid sequence, 108 residues long: Large ribosomal subunit protein uL24 (108 aa).

It belongs to the universal ribosomal protein uL24 family. In terms of assembly, part of the 50S ribosomal subunit.

One of two assembly initiator proteins, it binds directly to the 5'-end of the 23S rRNA, where it nucleates assembly of the 50S subunit. In terms of biological role, one of the proteins that surrounds the polypeptide exit tunnel on the outside of the subunit. The chain is Large ribosomal subunit protein uL24 from Desulfosudis oleivorans (strain DSM 6200 / JCM 39069 / Hxd3) (Desulfococcus oleovorans).